The chain runs to 274 residues: Large ribosomal subunit protein uL2cz/uL2cy (274 aa).

Disordered regions lie at residues 1–22 (MAIH…DSQV) and 225–274 (PVDH…RRSK).

It belongs to the universal ribosomal protein uL2 family. Part of the 50S ribosomal subunit.

The protein resides in the plastid. Its subcellular location is the chloroplast. In Arabis hirsuta (Hairy rock-cress), this protein is Large ribosomal subunit protein uL2cz/uL2cy (rpl2-A).